We begin with the raw amino-acid sequence, 500 residues long: DNA double-strand break repair helicase HerA (500 aa).

ATP is bound by residues Arg142, 151–156 (GSGKSN), and 459–460 (KI).

This sequence belongs to the HerA family. As to quaternary structure, homohexamer. Forms a complex with NurA.

The enzyme catalyses Couples ATP hydrolysis with the unwinding of duplex DNA at the replication fork by translocating in the 5'-3' direction. This creates two antiparallel DNA single strands (ssDNA). The leading ssDNA polymer is the template for DNA polymerase III holoenzyme which synthesizes a continuous strand.. It catalyses the reaction ATP + H2O = ADP + phosphate + H(+). The catalysed reaction is Couples ATP hydrolysis with the unwinding of duplex DNA by translocating in the 3'-5' direction.. With respect to regulation, ATPase activity is stimulated in the presence of linear double-stranded (ds)DNA. Helicase activity requires the presence of NurA. LhrC-Core (Hel112) inhibits the exonuclease activity of the HerA-NurA complex on ss- and dsDNA, has no effect on the nicking activity of NurA. In terms of biological role, involved in DNA double-strand break (DSB) repair. Probably acts with NurA to stimulate resection of the 5' strand and produce the long 3' single-strand that is required for RadA loading. NurA and HerA together stimulate the end-resection of six nucleotides of a linear DNA substrate. Has DNA-dependent ATPase activity and bidirectional DNA helicase activity. Preferentially binds single stranded (ss)DNA, bubble and semiforked DNA substrate over other DNA molecules tested. Stimulates the exo- but not endonuclease activity of NurA. This chain is DNA double-strand break repair helicase HerA, found in Saccharolobus solfataricus (strain ATCC 35092 / DSM 1617 / JCM 11322 / P2) (Sulfolobus solfataricus).